The chain runs to 227 residues: 7-cyano-7-deazaguanine synthase (227 aa).

Residue 8–18 (FSGGQDSTTCL) coordinates ATP. Zn(2+) is bound by residues C187, C196, C199, and C202.

It belongs to the QueC family. Zn(2+) is required as a cofactor.

The enzyme catalyses 7-carboxy-7-deazaguanine + NH4(+) + ATP = 7-cyano-7-deazaguanine + ADP + phosphate + H2O + H(+). The protein operates within purine metabolism; 7-cyano-7-deazaguanine biosynthesis. Catalyzes the ATP-dependent conversion of 7-carboxy-7-deazaguanine (CDG) to 7-cyano-7-deazaguanine (preQ(0)). The polypeptide is 7-cyano-7-deazaguanine synthase (Aliivibrio salmonicida (strain LFI1238) (Vibrio salmonicida (strain LFI1238))).